A 254-amino-acid polypeptide reads, in one-letter code: MKYRRILLKLSGEALMGERPYGIDPEVLQSIASEVASVVRAGVQVAIVVGGGNIWRGRKEAAAQGMDQASADYVGMLATVINALTLQDAIERAGIPTRVQTAIAMQEVAEPYIRRRAIRHLEKGRVVIFGAGSGNPFFTTDTTAALRAAEIDAEVIFKATKVDGVYDADPKTHPQARRYDVLSYQDVLTRDLRVMDSTAIALCKENQLPIVVFDLTTPGNIYRVVQGEPIGTWIGQTTPKSNGIPARLAQESGS.

ATP is bound at residue 9 to 12 (KLSG). Residue Gly51 participates in UMP binding. ATP contacts are provided by Gly52 and Arg56. UMP is bound by residues Asp72 and 133–140 (SGNPFFTT). Thr160, Tyr166, and Asp169 together coordinate ATP.

The protein belongs to the UMP kinase family. Homohexamer.

The protein resides in the cytoplasm. It catalyses the reaction UMP + ATP = UDP + ADP. It participates in pyrimidine metabolism; CTP biosynthesis via de novo pathway; UDP from UMP (UMPK route): step 1/1. Its activity is regulated as follows. Inhibited by UTP. Its function is as follows. Catalyzes the reversible phosphorylation of UMP to UDP. This is Uridylate kinase from Synechococcus sp. (strain JA-3-3Ab) (Cyanobacteria bacterium Yellowstone A-Prime).